The sequence spans 937 residues: Serrate RNA effector molecule homolog (937 aa).

Disordered regions lie at residues 1–87 (MGDS…DARP), 109–128 (HPAGPYGHPGGLHPREQQSA), 293–507 (KEEK…VGNS), and 847–874 (DTKRPQLPEHPGNTKKAPSDAAPPTAGY). Basic and acidic residues-rich tracts occupy residues 8-22 (YDRKRRDKFRGERSA), 29-63 (GADRADRSRGRDEWAERGRPRQDYRDYRPPPRDRG), and 76-87 (MRGDGWGDDARP). 3 stretches are compositionally biased toward basic and acidic residues: residues 293–316 (KEEKVEEADKPKEEKDDDKEKPAA), 323–336 (GEKNDAEKEVTAER), and 343–356 (PAAKEPEPEEEPSR). Low complexity predominate over residues 367–381 (DSGSSSSSSSSSSSS). Basic and acidic residues-rich tracts occupy residues 413–452 (KPVEEGEKEPQEEVENNGHKSGDEEEATKKDQAEPEKMDT), 459–473 (NNKESEEAEKEKDTS), and 480–500 (NKESNEDKQESEKTETIDLVK).

This sequence belongs to the ARS2 family.

Its subcellular location is the nucleus. In terms of biological role, acts as a mediator between the cap-binding complex (CBC) and RNA-mediated gene silencing (RNAi). Involved in innate immunity via the short interfering RNAs (siRNAs) processing machinery by restricting the viral RNA production. Also involved microRNA (miRNA)-mediated silencing by contributing to the stability and delivery of primary miRNA transcripts to the primary miRNA processing complex. This Aedes aegypti (Yellowfever mosquito) protein is Serrate RNA effector molecule homolog (Ars2).